The following is a 417-amino-acid chain: Odorant receptor Or1 (417 aa).

Residues 1-2 (MK) are Cytoplasmic-facing. The helical transmembrane segment at 3 to 23 (LNKLNPRWDAYDRRDSFWLQL) threads the bilayer. Topologically, residues 24 to 45 (LCLKYLGLWPPEDTDQATRNRY) are extracellular. The chain crosses the membrane as a helical span at residues 46 to 66 (IAYGWALRIMFLHLYALTQAL). At 67-73 (YFKDVKD) the chain is on the cytoplasmic side. A helical membrane pass occupies residues 74-94 (INDIANALFVLMTQVTLIYKL). Residues 95-133 (EKFNYNIARIQACLRKLNCTLYHPKQREEFSPVLQSMSG) lie on the Extracellular side of the membrane. N112 is a glycosylation site (N-linked (GlcNAc...) asparagine). Residues 134–154 (VFWLMIFLMFVAIFTIIMWVM) form a helical membrane-spanning segment. The Cytoplasmic portion of the chain corresponds to 155 to 178 (SPAFDNERRLPVPAWFPVDYHHSD). A helical membrane pass occupies residues 179 to 199 (IVYGVLFLYQTIGIVMSATYN). Residues 200-284 (FSTDTMFSGL…ILSFGDEVQD (85 aa)) lie on the Extracellular side of the membrane. Residues 285–305 (IFQGSIFAQVCASVIIICMTL) traverse the membrane as a helical segment. At 306 to 317 (LQATGDDVTMAD) the chain is on the cytoplasmic side. The helical transmembrane segment at 318 to 338 (LLGCGFYLLVMTSQVFIFCYV) threads the bilayer. The Extracellular portion of the chain corresponds to 339-417 (GNEISYTTDK…LAVLQSMESE (79 aa)).

The protein belongs to the insect chemoreceptor superfamily. Heteromeric odorant receptor channel (TC 1.A.69) family. Or2a subfamily. Female-specific antennae and maxillary palp expression.

The protein localises to the cell membrane. Odorant receptor which plays a critical role in the anthropophilic host-seeking behavior; establishes the host preference to transmit malaria. May participate in the phenomenon of decreased host-seeking behavior in disease vector mosquitoes after blood feeding. In Anopheles gambiae (African malaria mosquito), this protein is Odorant receptor Or1 (OR1).